Here is a 487-residue protein sequence, read N- to C-terminus: 1-aminocyclopropane-1-carboxylate synthase 1 (487 aa).

Position 286 is an N6-(pyridoxal phosphate)lysine (lysine 286).

Belongs to the class-I pyridoxal-phosphate-dependent aminotransferase family. Homodimer. Pyridoxal 5'-phosphate is required as a cofactor.

The enzyme catalyses S-adenosyl-L-methionine = 1-aminocyclopropane-1-carboxylate + S-methyl-5'-thioadenosine + H(+). Its pathway is alkene biosynthesis; ethylene biosynthesis via S-adenosyl-L-methionine; ethylene from S-adenosyl-L-methionine: step 1/2. Catalyzes the formation of 1-aminocyclopropane-1-carboxylate, a direct precursor of ethylene in higher plants. This is 1-aminocyclopropane-1-carboxylate synthase 1 (ACC1) from Oryza sativa subsp. indica (Rice).